A 159-amino-acid chain; its full sequence is Dihydrofolate reductase (159 aa).

The 156-residue stretch at 2–157 (TLSILVAHDL…IPHTFLHLIR (156 aa)) folds into the DHFR domain. A substrate-binding site is contributed by 6 to 8 (LVA). NADP(+) contacts are provided by residues 7-8 (VA) and 15-20 (IGFENQ). Aspartate 28 is a binding site for substrate. Residue 44–47 (GRKT) participates in NADP(+) binding. Residue arginine 58 coordinates substrate. NADP(+)-binding positions include 63 to 66 (LTSD) and 93 to 98 (FGGQTL). Substrate is bound at residue threonine 112.

It belongs to the dihydrofolate reductase family.

It catalyses the reaction (6S)-5,6,7,8-tetrahydrofolate + NADP(+) = 7,8-dihydrofolate + NADPH + H(+). It functions in the pathway cofactor biosynthesis; tetrahydrofolate biosynthesis; 5,6,7,8-tetrahydrofolate from 7,8-dihydrofolate: step 1/1. Its function is as follows. Key enzyme in folate metabolism. Catalyzes an essential reaction for de novo glycine and purine synthesis, and for DNA precursor synthesis. This is Dihydrofolate reductase (folA) from Staphylococcus aureus (strain COL).